The sequence spans 367 residues: DNA replication and repair protein RecF (367 aa).

An ATP-binding site is contributed by 30 to 37 (GDNAQGKT).

This sequence belongs to the RecF family.

Its subcellular location is the cytoplasm. Functionally, the RecF protein is involved in DNA metabolism; it is required for DNA replication and normal SOS inducibility. RecF binds preferentially to single-stranded, linear DNA. It also seems to bind ATP. The protein is DNA replication and repair protein RecF of Clostridium beijerinckii (strain ATCC 51743 / NCIMB 8052) (Clostridium acetobutylicum).